The following is a 252-amino-acid chain: Imidazole glycerol phosphate synthase subunit HisF (252 aa).

Residues aspartate 11 and aspartate 130 contribute to the active site.

The protein belongs to the HisA/HisF family. In terms of assembly, heterodimer of HisH and HisF.

It localises to the cytoplasm. The catalysed reaction is 5-[(5-phospho-1-deoxy-D-ribulos-1-ylimino)methylamino]-1-(5-phospho-beta-D-ribosyl)imidazole-4-carboxamide + L-glutamine = D-erythro-1-(imidazol-4-yl)glycerol 3-phosphate + 5-amino-1-(5-phospho-beta-D-ribosyl)imidazole-4-carboxamide + L-glutamate + H(+). The protein operates within amino-acid biosynthesis; L-histidine biosynthesis; L-histidine from 5-phospho-alpha-D-ribose 1-diphosphate: step 5/9. In terms of biological role, IGPS catalyzes the conversion of PRFAR and glutamine to IGP, AICAR and glutamate. The HisF subunit catalyzes the cyclization activity that produces IGP and AICAR from PRFAR using the ammonia provided by the HisH subunit. The sequence is that of Imidazole glycerol phosphate synthase subunit HisF from Bacillus velezensis (strain DSM 23117 / BGSC 10A6 / LMG 26770 / FZB42) (Bacillus amyloliquefaciens subsp. plantarum).